We begin with the raw amino-acid sequence, 1265 residues long: DNA-directed RNA polymerase subunit beta'' (1265 aa).

Residues Cys-223, Cys-297, Cys-304, and Cys-307 each contribute to the Zn(2+) site.

Belongs to the RNA polymerase beta' chain family. RpoC2 subfamily. As to quaternary structure, in plastids the minimal PEP RNA polymerase catalytic core is composed of four subunits: alpha, beta, beta', and beta''. When a (nuclear-encoded) sigma factor is associated with the core the holoenzyme is formed, which can initiate transcription. Zn(2+) serves as cofactor.

It is found in the plastid. The protein resides in the cyanelle. The enzyme catalyses RNA(n) + a ribonucleoside 5'-triphosphate = RNA(n+1) + diphosphate. Functionally, DNA-dependent RNA polymerase catalyzes the transcription of DNA into RNA using the four ribonucleoside triphosphates as substrates. This chain is DNA-directed RNA polymerase subunit beta'', found in Cyanophora paradoxa.